Consider the following 218-residue polypeptide: Transmembrane gamma-carboxyglutamic acid protein 1 (218 aa).

Positions 1–20 are excised as a propeptide; it reads MGRVFLTGEKANSILKRYPR. One can recognise a Gla domain in the interval 21-66; that stretch reads ANGFFEEIRQGNIERECKEEFCTFEEAREAFENNEKTKEFWSTYTK. At 21–83 the chain is on the extracellular side; it reads ANGFFEEIRQ…RGSDWFQFYL (63 aa). Residues Cys-37 and Cys-42 are joined by a disulfide bond. A helical membrane pass occupies residues 84–106; the sequence is TFPLIFGLFIILLVIFLIWRCFL. Residues 107-218 are Cytoplasmic-facing; the sequence is RNKTRRQTVT…PMVPVVTTIK (112 aa). Positions 161–195 are disordered; the sequence is TRLSNCDPPPTYEEATGQVNLQRSETEPHLDPPPE.

Gla residues are produced after subsequent post-translational modifications of glutamate by a vitamin K-dependent gamma-carboxylase. Highly expressed in the spinal cord.

The protein resides in the membrane. This Homo sapiens (Human) protein is Transmembrane gamma-carboxyglutamic acid protein 1 (PRRG1).